The sequence spans 56 residues: Large ribosomal subunit protein bL33A (56 aa).

The protein belongs to the bacterial ribosomal protein bL33 family.

This chain is Large ribosomal subunit protein bL33A, found in Cutibacterium acnes (strain DSM 16379 / KPA171202) (Propionibacterium acnes).